The sequence spans 218 residues: Phosphoglycolate phosphatase (218 aa).

The Nucleophile role is filled by Asp7. Positions 7, 9, and 167 each coordinate Mg(2+).

Belongs to the HAD-like hydrolase superfamily. CbbY/CbbZ/Gph/YieH family. It depends on Mg(2+) as a cofactor.

The catalysed reaction is 2-phosphoglycolate + H2O = glycolate + phosphate. It participates in organic acid metabolism; glycolate biosynthesis; glycolate from 2-phosphoglycolate: step 1/1. Its function is as follows. Specifically catalyzes the dephosphorylation of 2-phosphoglycolate. Is involved in the dissimilation of the intracellular 2-phosphoglycolate formed during the DNA repair of 3'-phosphoglycolate ends, a major class of DNA lesions induced by oxidative stress. This Cereibacter sphaeroides (strain ATCC 17025 / ATH 2.4.3) (Rhodobacter sphaeroides) protein is Phosphoglycolate phosphatase.